A 333-amino-acid chain; its full sequence is Probable cytosolic iron-sulfur protein assembly protein ciao1 (333 aa).

7 WD repeats span residues 14 to 53, 59 to 98, 103 to 142, 148 to 187, 192 to 231, 246 to 285, and 297 to 333; these read HPDS…WVCK, GHQR…FECI, GHEN…EYEC, SHTQ…WVCC, GHTS…EQGS, YHTR…DPLQ, and AHTQ…QKPE.

Belongs to the WD repeat CIA1 family. In terms of assembly, component of the CIA complex.

Functionally, key component of the cytosolic iron-sulfur protein assembly (CIA) complex, a multiprotein complex that mediates the incorporation of iron-sulfur cluster into extramitochondrial Fe/S proteins. The sequence is that of Probable cytosolic iron-sulfur protein assembly protein ciao1 (ciao1) from Xenopus tropicalis (Western clawed frog).